Reading from the N-terminus, the 278-residue chain is Protein mtd-1 (278 aa).

An N-terminal signal peptide occupies residues 1 to 17 (MRSSLLLLVFFLSIGWA). Residues 18 to 254 (RYCVHNEKSW…EMLEEIEARK (237 aa)) are Extracellular-facing. N-linked (GlcNAc...) asparagine glycosylation is found at Asn-40, Asn-73, Asn-163, and Asn-190. A helical transmembrane segment spans residues 255-271 (VPVDSSAPVNIILSIAF). At 272 to 278 (SIFLIHF) the chain is on the cytoplasmic side.

The protein resides in the cell membrane. Its function is as follows. Plays a role in mechanosensory transduction (touch sensitivity). The chain is Protein mtd-1 from Caenorhabditis elegans.